The chain runs to 308 residues: uncharacterized protein (308 aa).

Helical transmembrane passes span 6–26 (VVLIVLILVLVGYFSKIFGIL), 31–51 (AKILNNIVIYIAMPSTIFLTI), 63–83 (FLKLPVVIFLCCLFVGILAYL), 100–120 (ILVSMLGNTGFLGYPVALGMF), 128–148 (AIFCDLGGVFATMLLGTYVGI), 162–182 (MAKFPPLITGILSIILVFFGF), 195–215 (LNYLSSATVPLIMMSLGLSLS), 221–241 (FGVFWGIIASIFRFIVSPATA), 257–277 (VLLVESSMPSAMMTLVLGTLY), and 287–307 (SIFITTTFSLLVIALWGWILL).

The protein belongs to the auxin efflux carrier (TC 2.A.69) family.

The protein localises to the cell membrane. This is an uncharacterized protein from Methanocaldococcus jannaschii (strain ATCC 43067 / DSM 2661 / JAL-1 / JCM 10045 / NBRC 100440) (Methanococcus jannaschii).